Consider the following 250-residue polypeptide: Ribonuclease HII (250 aa).

The region spanning 66-250 (QLVAGVDEVG…TFAPVSDFFK (185 aa)) is the RNase H type-2 domain. The a divalent metal cation site is built by aspartate 72, glutamate 73, and aspartate 164.

This sequence belongs to the RNase HII family. Mn(2+) is required as a cofactor. The cofactor is Mg(2+).

The protein resides in the cytoplasm. It catalyses the reaction Endonucleolytic cleavage to 5'-phosphomonoester.. Its function is as follows. Endonuclease that specifically degrades the RNA of RNA-DNA hybrids. In Lactobacillus acidophilus (strain ATCC 700396 / NCK56 / N2 / NCFM), this protein is Ribonuclease HII.